Here is a 356-residue protein sequence, read N- to C-terminus: Histidinol-phosphate aminotransferase (356 aa).

N6-(pyridoxal phosphate)lysine is present on lysine 222.

The protein belongs to the class-II pyridoxal-phosphate-dependent aminotransferase family. Histidinol-phosphate aminotransferase subfamily. As to quaternary structure, homodimer. Pyridoxal 5'-phosphate is required as a cofactor.

The catalysed reaction is L-histidinol phosphate + 2-oxoglutarate = 3-(imidazol-4-yl)-2-oxopropyl phosphate + L-glutamate. The protein operates within amino-acid biosynthesis; L-histidine biosynthesis; L-histidine from 5-phospho-alpha-D-ribose 1-diphosphate: step 7/9. In Lactiplantibacillus plantarum (strain ATCC BAA-793 / NCIMB 8826 / WCFS1) (Lactobacillus plantarum), this protein is Histidinol-phosphate aminotransferase.